A 304-amino-acid polypeptide reads, in one-letter code: Ferredoxin fas2 (304 aa).

Residues 2–29 (KVVVNERRCFGSGQCVLVAPEVFEQSND) enclose the 4Fe-4S ferredoxin-type domain. C10, C16, and C54 together coordinate [3Fe-4S] cluster. The tract at residues 66–304 (MRQEPTEFSY…QSARSSIQQR (239 aa)) is transketolase-like.

This sequence in the C-terminal section; belongs to the transketolase family. [3Fe-4S] cluster is required as a cofactor.

Its function is as follows. Plays a role in electron transfer. The fas operon encodes genes involved in cytokinin production and in host plant fasciation (leafy gall). The sequence is that of Ferredoxin fas2 (fas2) from Rhodococcoides fascians (Rhodococcus fascians).